Reading from the N-terminus, the 197-residue chain is dTTP/UTP pyrophosphatase (197 aa).

The active-site Proton acceptor is aspartate 70.

Belongs to the Maf family. YhdE subfamily. A divalent metal cation is required as a cofactor.

It localises to the cytoplasm. The enzyme catalyses dTTP + H2O = dTMP + diphosphate + H(+). The catalysed reaction is UTP + H2O = UMP + diphosphate + H(+). Its function is as follows. Nucleoside triphosphate pyrophosphatase that hydrolyzes dTTP and UTP. May have a dual role in cell division arrest and in preventing the incorporation of modified nucleotides into cellular nucleic acids. The protein is dTTP/UTP pyrophosphatase of Yersinia pestis bv. Antiqua (strain Antiqua).